The chain runs to 36 residues: Serine protease inhibitor 2 (36 aa).

The 36-residue stretch at 1 to 36 folds into the Pacifastin domain; it reads EISCEPGTTFQDKCNTCRCGKDGKSAAGCTLKACPQ. 3 disulfide bridges follow: Cys4-Cys19, Cys14-Cys34, and Cys17-Cys29.

It belongs to the protease inhibitor I19 family. In terms of tissue distribution, expressed in hemolymph.

Its subcellular location is the secreted. In terms of biological role, probable serine protease inhibitor. The chain is Serine protease inhibitor 2 from Melanoplus sanguinipes (Migratory grasshopper).